A 220-amino-acid chain; its full sequence is Deoxyribose-phosphate aldolase (220 aa).

Residue Asp-89 is the Proton donor/acceptor of the active site. The active-site Schiff-base intermediate with acetaldehyde is the Lys-151. Lys-180 serves as the catalytic Proton donor/acceptor.

It belongs to the DeoC/FbaB aldolase family. DeoC type 1 subfamily.

It localises to the cytoplasm. The catalysed reaction is 2-deoxy-D-ribose 5-phosphate = D-glyceraldehyde 3-phosphate + acetaldehyde. It functions in the pathway carbohydrate degradation; 2-deoxy-D-ribose 1-phosphate degradation; D-glyceraldehyde 3-phosphate and acetaldehyde from 2-deoxy-alpha-D-ribose 1-phosphate: step 2/2. In terms of biological role, catalyzes a reversible aldol reaction between acetaldehyde and D-glyceraldehyde 3-phosphate to generate 2-deoxy-D-ribose 5-phosphate. This chain is Deoxyribose-phosphate aldolase, found in Mycoplasmopsis pulmonis (strain UAB CTIP) (Mycoplasma pulmonis).